Consider the following 335-residue polypeptide: NmrA-like family domain-containing oxidoreductase hkm9 (335 aa).

Residues 12–17 (GATGNQ), 38–42 (RNPNS), 59–60 (DG), 80–82 (INS), Lys137, and 161–164 (YLEN) contribute to the NADP(+) site.

The protein belongs to the NmrA-type oxidoreductase family.

Its pathway is secondary metabolite biosynthesis. In terms of biological role, nmrA-like family domain-containing oxidoreductase; part of the gene cluster that mediates the biosynthesis of hancockiamides, an unusual new family of N-cinnamoylated piperazines. The NRPS hkm10 and the NmrA-like reductase hkm9 are proposed to convert two molecules of L-Phe to the intermediary piperazine called xenocockiamide A. Xenocockiamide A is then converted to hancockiamide D via a series of hydroxylations and O-methylations. The tyrosinase hkm6 may catalyze an aromatic hydroxylation, then the 2-oxoglutarate-dependent Fe(II) dioxygenase hkm4 and the FAD-dependent phenol hydroxylase hkm7 may catalyze consecutive hydroxylations to install 2 more hydroxy groups, and the methyltransferase hkm8 probably catalyzes two methylations using 2 molecules of S-adenosyl-L-methionine (SAM). The NRPS hkm11 activates and transfers trans-cinnamate supplied by the PAL hkm12 to hancockiamide D and produces hancockiamide A. NRPS Hkm11 has the flexibility to tolerate the bulky hancockiamide G as a substrate and the absence of the acetyl-transferase hkm3 opens up the opportunity for hkm11 to introduce a second N-cinnamoyl moiety. The cytochrome P450 monooxygenase hkm5 catalyzes the methylenedioxy bridge formation, converting hancockiamide A into hancockiamide G. Hkm5 can also convert hancockiamide B into hancockiamide C, and hancockiamide D into hancockiamide H. The N-acetyltransferase hkm3 finally transfers an acetyl group to 1-N of piperazine, converting hancockiamide A into hancockiamide B and hancockiamide G into hancockiamide C. The protein is NmrA-like family domain-containing oxidoreductase hkm9 of Aspergillus hancockii.